Consider the following 1240-residue polypeptide: ABC transporter B family member 17 (1240 aa).

The ABC transmembrane type-1 1 domain occupies 35-324 (MALGLIGAVG…SLSNLKYFSE (290 aa)). The helical transmembrane segment at 36–56 (ALGLIGAVGDGFITPVVVFIF) threads the bilayer. A glycan (N-linked (GlcNAc...) asparagine) is linked at Asn-70. 5 consecutive transmembrane segments (helical) span residues 81–101 (VVALLYVACGSWVICFLEGYC), 158–180 (LPNFLMNASAFVASYIVSFILMW), 184–206 (IVGFPFIILLLVPGLMYGRALVS), 264–284 (GITIGSNGVTHAIWAFLTWYG), and 296–316 (GTVFVVISCITYGGVSLGQSL). Residues 359-595 (VEFNHVKFTY…IDGQYTSLVS (237 aa)) enclose the ABC transporter 1 domain. Residue 394 to 401 (GGSGSGKS) participates in ATP binding. Asn-542, Asn-609, and Asn-642 each carry an N-linked (GlcNAc...) asparagine glycan. The ABC transmembrane type-1 2 domain occupies 672–960 (ALYGCLSAAL…AGTMTTDLAR (289 aa)). Transmembrane regions (helical) follow at residues 681–701 (LVGVLQPVSAYSAGSVISVFF) and 714–734 (IYVLLFVGLAIFSFLVNISQH). Asn-769 carries an N-linked (GlcNAc...) asparagine glycan. 4 helical membrane passes run 793-815 (MSLLVQTISAVIIACIIGLVIAW), 817-839 (LAIVMISVQPLIVVCFYTQRVLL), 896-919 (WLAGIVLGTSRSLITCTSALNFWY), and 923-943 (LIADGKIVSKAFFEIFLIFVT). Positions 995–1233 (ITFLNVDFAY…GPTGTYFSLA (239 aa)) constitute an ABC transporter 2 domain. Residue Asn-1015 is glycosylated (N-linked (GlcNAc...) asparagine). Residue 1030-1037 (GTSGSGKS) coordinates ATP.

This sequence belongs to the ABC transporter superfamily. ABCB family. Multidrug resistance exporter (TC 3.A.1.201) subfamily.

The protein localises to the membrane. This Arabidopsis thaliana (Mouse-ear cress) protein is ABC transporter B family member 17 (ABCB17).